Consider the following 628-residue polypeptide: Set1/Ash2 histone methyltransferase complex subunit ASH2 (628 aa).

An N-acetylmethionine modification is found at Met-1. Residues 1–18 (MAAAGAGPGQEAGAGPGP) show a composition bias toward gly residues. A PHD-type; atypical zinc finger spans residues 1-66 (MAAAGAGPGQ…SGEAEGGEAN (66 aa)). The disordered stretch occupies residues 1–107 (MAAAGAGPGQ…QAGSVDEENG (107 aa)). A compositionally biased stretch (low complexity) spans 36 to 65 (AAGAAAPPGEGISAAPTVEPSSGEAEGGEA). The DNA-binding stretch occupies residues 67–177 (LVDVSGGLET…MCLSALANLT (111 aa)). Residue Ser-101 is modified to Phosphoserine. The segment at 117–150 (CGICTKWFTADTFGIDTSSCLPFMTNYSFHCNVC) adopts a C4-type zinc-finger fold. The span at 235 to 252 (LVKEHPDPGSKDPEEDYP) shows a compositional bias: basic and acidic residues. Residues 235 to 331 (LVKEHPDPGS…AQRLPPHGYP (97 aa)) are disordered. Polar residues predominate over residues 270 to 282 (NQKQSSAVSTSGN). Positions 283–295 (LNGGIAAGSSGKG) are enriched in gly residues. At Arg-296 the chain carries Asymmetric dimethylarginine; by PRMT1 and PRMT5. Phosphoserine is present on Ser-316. Residues 316 to 628 (SDPLFSAQRL…DGRRSPPWEP (313 aa)) form an interaction with RBBP5 region. Positions 360–583 (LDCWAGKPIP…VSINFGPCFK (224 aa)) constitute a B30.2/SPRY domain.

In terms of assembly, interacts with HCFC1. Core component of several methyltransferase-containing complexes including MLL1/MLL, MLL2/3 (also named ASCOM complex) and MLL4/WBP7. Each complex is at least composed of ASH2L, RBBP5, WDR5, DPY30, one or more specific histone methyltransferases (KMT2A/MLL1, KMT2D/MLL2, KMT2C/MLL3 and KMT2B/MLL4), and the facultative components PAGR1, BACC1, CHD8, E2F6, HCFC1, HCFC2, HSP70, INO80C, KDM6A, KANSL1, LAS1L, MAX, MCRS1, MEN1, MGA, KAT8/MOF, NCOA6, PAXIP1/PTIP, PELP1, PHF20, PRP31, RING2, RUVB1/TIP49A, RUVB2/TIP49B, SENP3, TAF1, TAF4, TAF6, TAF7, TAF9, TEX10 and alpha- and beta-tubulin. Component of the SET1 complex, at least composed of the catalytic subunit (SETD1A or SETD1B), WDR5, WDR82, RBBP5, ASH2L/ASH2, CXXC1/CFP1, HCFC1 and DPY30. Found in a complex with RBBP5, ASH2L, DPY30, KMT2A, KMT2D and WDR5. Component of a histone methylation complex composed of at least ZNF335, RBBP5, ASH2L and WDR5; the complex may have histone H3-specific methyltransferase activity, however does not have specificity for 'Lys-4' of histone H3. Within the complex, interacts with ZNF335. Interacts with RBBP5. Components of this complex may associate with components of a nuclear receptor-mediated transcription complex to form a complex at least composed of ZNF335, HCFC1, CCAR2, EMSY, MKI67, RBBP5, ASH2L and WDR5. Within this complex also interacts with CCAR2 and EMSY. Interacts with DPY30. Interacts with SETD1A and SETD1B. Both monomethylated and dimethylated on arginine residues in the C-terminus. Arg-296 is the major site. Methylation is not required for nuclear localization, nor for MLL complex integrity or maintenance of global histone H3K4me3 levels. In terms of tissue distribution, ubiquitously expressed. Predominantly expressed in adult heart and testis and fetal lung and liver, with barely detectable expression in adult lung, liver, kidney, prostate, and peripheral leukocytes.

The protein localises to the nucleus. Functionally, transcriptional regulator. Component or associated component of some histone methyltransferase complexes which regulates transcription through recruitment of those complexes to gene promoters. Component of the Set1/Ash2 histone methyltransferase (HMT) complex, a complex that specifically methylates 'Lys-4' of histone H3, but not if the neighboring 'Lys-9' residue is already methylated. As part of the MLL1/MLL complex it is involved in methylation and dimethylation at 'Lys-4' of histone H3. May play a role in hematopoiesis. In association with RBBP5 and WDR5, stimulates the histone methyltransferase activities of KMT2A, KMT2B, KMT2C, KMT2D, SETD1A and SETD1B. The protein is Set1/Ash2 histone methyltransferase complex subunit ASH2 (ASH2L) of Homo sapiens (Human).